We begin with the raw amino-acid sequence, 365 residues long: Sulfate/thiosulfate import ATP-binding protein CysA (365 aa).

The region spanning 3-237 is the ABC transporter domain; that stretch reads IEIANIKKSF…PATRFVLEFM (235 aa). 35–42 is a binding site for ATP; that stretch reads GPSGSGKT.

Belongs to the ABC transporter superfamily. Sulfate/tungstate importer (TC 3.A.1.6) family. In terms of assembly, the complex is composed of two ATP-binding proteins (CysA), two transmembrane proteins (CysT and CysW) and a solute-binding protein (CysP).

The protein resides in the cell inner membrane. It carries out the reaction sulfate(out) + ATP + H2O = sulfate(in) + ADP + phosphate + H(+). It catalyses the reaction thiosulfate(out) + ATP + H2O = thiosulfate(in) + ADP + phosphate + H(+). Part of the ABC transporter complex CysAWTP involved in sulfate/thiosulfate import. Responsible for energy coupling to the transport system. The chain is Sulfate/thiosulfate import ATP-binding protein CysA from Shigella flexneri.